A 229-amino-acid polypeptide reads, in one-letter code: Large ribosomal subunit protein uL1 (229 aa).

The protein belongs to the universal ribosomal protein uL1 family. Part of the 50S ribosomal subunit.

Functionally, binds directly to 23S rRNA. The L1 stalk is quite mobile in the ribosome, and is involved in E site tRNA release. In terms of biological role, protein L1 is also a translational repressor protein, it controls the translation of the L11 operon by binding to its mRNA. This chain is Large ribosomal subunit protein uL1, found in Chlorobium phaeobacteroides (strain DSM 266 / SMG 266 / 2430).